We begin with the raw amino-acid sequence, 709 residues long: Golgin-84 (709 aa).

The Cytoplasmic portion of the chain corresponds to 1–664 (MASWLKVAED…RATRFLWRHP (664 aa)). Disordered regions lie at residues 24-132 (TELS…VVDR), 144-195 (EVEV…NQDA), and 211-265 (EVIH…DQLE). The span at 29-43 (EQSSPQPSGSSSQEG) shows a compositional bias: low complexity. Basic and acidic residues predominate over residues 78–89 (PPRERIKIEKIR). Low complexity predominate over residues 94–113 (VDSSSVDASASKPDVSSSDV). Basic and acidic residues predominate over residues 114–132 (KGLDDDGGAEKEEKVVVDR). The span at 162-180 (DGAADSGNSEGAAESSAPS) shows a compositional bias: low complexity. Basic and acidic residues-rich tracts occupy residues 211–222 (EVIHEKNIKEVP) and 248–265 (QQEHKLDSGSVKDQDQLE). Residues 287–592 (RVCAGLSSRL…AALEFQLEKS (306 aa)) are a coiled coil. Residues 665-684 (VARVSLLFYLVFVHLFLMYL) traverse the membrane as a helical; Signal-anchor for type II membrane protein segment. Over 685–707 (MHRLQDFASREGPTAMGGLANSD) the chain is Lumenal.

Its subcellular location is the golgi apparatus membrane. Its function is as follows. May be involved in maintaining Golgi structure and in intra-Golgi transport. This is Golgin-84 from Oryza sativa subsp. japonica (Rice).